Consider the following 480-residue polypeptide: Aspartyl/glutamyl-tRNA(Asn/Gln) amidotransferase subunit B (480 aa).

This sequence belongs to the GatB/GatE family. GatB subfamily. In terms of assembly, heterotrimer of A, B and C subunits.

It catalyses the reaction L-glutamyl-tRNA(Gln) + L-glutamine + ATP + H2O = L-glutaminyl-tRNA(Gln) + L-glutamate + ADP + phosphate + H(+). The catalysed reaction is L-aspartyl-tRNA(Asn) + L-glutamine + ATP + H2O = L-asparaginyl-tRNA(Asn) + L-glutamate + ADP + phosphate + 2 H(+). Functionally, allows the formation of correctly charged Asn-tRNA(Asn) or Gln-tRNA(Gln) through the transamidation of misacylated Asp-tRNA(Asn) or Glu-tRNA(Gln) in organisms which lack either or both of asparaginyl-tRNA or glutaminyl-tRNA synthetases. The reaction takes place in the presence of glutamine and ATP through an activated phospho-Asp-tRNA(Asn) or phospho-Glu-tRNA(Gln). The protein is Aspartyl/glutamyl-tRNA(Asn/Gln) amidotransferase subunit B of Streptococcus agalactiae serotype III (strain NEM316).